The following is a 333-amino-acid chain: Salivary glue protein Sgs-3 (333 aa).

An N-terminal signal peptide occupies residues 1–23 (MKLTIATALVGILLIACAHVANG). Residues 51–285 (TCRPPTTTRC…ATARPTSKPC (235 aa)) form a disordered region. Over residues 60-73 (CPPPTTTRCPPPTR) the composition is skewed to pro residues. The segment covering 74 to 88 (PAECTATTKRPTARP) has biased composition (low complexity). Over residues 89 to 277 (TTKRATTRRT…TKRATTKRAT (189 aa)) the composition is skewed to basic residues.

The polypeptide is Salivary glue protein Sgs-3 (Sgs3) (Drosophila erecta (Fruit fly)).